The primary structure comprises 237 residues: Class B acid phosphatase (237 aa).

The first 23 residues, 1 to 23 (MRKVTLVFSAIAFAFSLNGVVQA), serve as a signal peptide directing secretion. The Nucleophile role is filled by Asp69. Residues Asp69 and Asp71 each contribute to the Mg(2+) site. Asp71 acts as the Proton donor in catalysis. Substrate-binding positions include 137 to 138 (TG) and Lys177. Asp192 contributes to the Mg(2+) binding site.

This sequence belongs to the class B bacterial acid phosphatase family. Homotetramer. It depends on Mg(2+) as a cofactor.

The protein localises to the periplasm. It carries out the reaction a phosphate monoester + H2O = an alcohol + phosphate. Functionally, dephosphorylates several organic phosphate monoesters. Also has a phosphotransferase activity catalyzing the transfer of low-energy phosphate groups from organic phosphate monoesters to free hydroxyl groups of various organic compounds. The sequence is that of Class B acid phosphatase from Xenorhabdus bovienii (strain SS-2004) (Xenorhabdus nematophila subsp. bovienii).